Reading from the N-terminus, the 312-residue chain is Malate dehydrogenase (312 aa).

Residues 12-17 (GAGFTG) and aspartate 36 each bind NAD(+). Residues arginine 87 and arginine 93 each contribute to the substrate site. NAD(+)-binding positions include asparagine 100 and 123 to 125 (LTN). A substrate-binding site is contributed by asparagine 125. At serine 149 the chain carries Phosphoserine. Arginine 156 is a substrate binding site. The active-site Proton acceptor is histidine 180.

This sequence belongs to the LDH/MDH superfamily. MDH type 3 family.

It carries out the reaction (S)-malate + NAD(+) = oxaloacetate + NADH + H(+). Catalyzes the reversible oxidation of malate to oxaloacetate. This Bacillus licheniformis (strain ATCC 14580 / DSM 13 / JCM 2505 / CCUG 7422 / NBRC 12200 / NCIMB 9375 / NCTC 10341 / NRRL NRS-1264 / Gibson 46) protein is Malate dehydrogenase.